The chain runs to 345 residues: UPF0324 membrane protein Cgl0015/cg0018 (345 aa).

Transmembrane regions (helical) follow at residues 15 to 37 (LRTG…VLIA), 44 to 66 (FSGV…LIQL), 81 to 103 (LLRL…SLGF), 105 to 124 (MLAV…ILMG), 134 to 156 (VLLI…EGVT), 163 to 185 (VVTA…PFAT), 205 to 227 (EIAQ…AVVV), 261 to 280 (VVPL…STVA), 285 to 307 (VIAA…LGCG), and 320 to 342 (PFIL…TLLT).

The protein belongs to the UPF0324 family.

It localises to the cell membrane. The protein is UPF0324 membrane protein Cgl0015/cg0018 of Corynebacterium glutamicum (strain ATCC 13032 / DSM 20300 / JCM 1318 / BCRC 11384 / CCUG 27702 / LMG 3730 / NBRC 12168 / NCIMB 10025 / NRRL B-2784 / 534).